The sequence spans 116 residues: Protein SPIRAL1-like 1 (116 aa).

Residues 1-12 (MSRGGSAGGGQS) show a composition bias toward gly residues. The interval 1–116 (MSRGGSAGGG…SSLGYLFGGN (116 aa)) is disordered. Over residues 27 to 43 (AAKPAPAAAPAPAPAPA) the composition is skewed to pro residues. Residues 44–60 (PAAAVAAPAEKPSPAKA) are compositionally biased toward low complexity. A compositionally biased stretch (polar residues) spans 72–90 (GSRSNNNYHRADGQNTGNF). Gly residues predominate over residues 103–116 (PGGGSSLGYLFGGN).

It belongs to the SPIRAL1 family.

Its function is as follows. Acts in maintaining the cortical microtubules organization essential for anisotropic cell growth. This Oryza sativa subsp. japonica (Rice) protein is Protein SPIRAL1-like 1.